The sequence spans 139 residues: uncharacterized protein (139 aa).

Helical transmembrane passes span 19 to 39, 64 to 84, and 89 to 109; these read CIIF…FILG, IFNV…FNLF, and AITI…WILG.

The protein localises to the cell membrane. This is an uncharacterized protein from Methanocaldococcus jannaschii (strain ATCC 43067 / DSM 2661 / JAL-1 / JCM 10045 / NBRC 100440) (Methanococcus jannaschii).